A 244-amino-acid polypeptide reads, in one-letter code: Orotidine 5'-phosphate decarboxylase (244 aa).

Substrate contacts are provided by residues Asp-12, Lys-34, 61–70 (DLKLFDIPNT), Thr-125, Arg-187, Gln-196, Gly-216, and Arg-217. Lys-63 serves as the catalytic Proton donor.

This sequence belongs to the OMP decarboxylase family. Type 1 subfamily. As to quaternary structure, homodimer.

It catalyses the reaction orotidine 5'-phosphate + H(+) = UMP + CO2. It functions in the pathway pyrimidine metabolism; UMP biosynthesis via de novo pathway; UMP from orotate: step 2/2. Its function is as follows. Catalyzes the decarboxylation of orotidine 5'-monophosphate (OMP) to uridine 5'-monophosphate (UMP). The sequence is that of Orotidine 5'-phosphate decarboxylase from Dictyoglomus turgidum (strain DSM 6724 / Z-1310).